The following is a 129-amino-acid chain: Small ribosomal subunit protein uS11 (129 aa).

Belongs to the universal ribosomal protein uS11 family. Part of the 30S ribosomal subunit. Interacts with proteins S7 and S18. Binds to IF-3.

In terms of biological role, located on the platform of the 30S subunit, it bridges several disparate RNA helices of the 16S rRNA. Forms part of the Shine-Dalgarno cleft in the 70S ribosome. The chain is Small ribosomal subunit protein uS11 from Haemophilus influenzae (strain ATCC 51907 / DSM 11121 / KW20 / Rd).